The primary structure comprises 97 residues: MTSLLTTPSPREELMTTPILQPTEALSPEDGASTALIAVVITVVFLTLLSVVILIFFYLYKNKGSYVTYEPTEGEPSAIVQMESDLAKGSEKEEYFI.

Over 1-36 (MTSLLTTPSPREELMTTPILQPTEALSPEDGASTAL) the chain is Extracellular. Residue Thr2 is glycosylated (O-linked (GalNAc...) threonine). Residue Ser3 is glycosylated (O-linked (GalNAc...) serine). Thr6 and Thr7 each carry an O-linked (GalNAc...) threonine glycan. Ser9 carries O-linked (GalNAc...) serine glycosylation. O-linked (GalNAc...) threonine glycans are attached at residues Thr16, Thr17, and Thr23. The helical; Signal-anchor for type III membrane protein transmembrane segment at 37–57 (IAVVITVVFLTLLSVVILIFF) threads the bilayer. Residues 58–97 (YLYKNKGSYVTYEPTEGEPSAIVQMESDLAKGSEKEEYFI) lie on the Cytoplasmic side of the membrane.

It belongs to the SMAGP family. O-glycosylated. The O-glycan is modified with sialic acid residues. As to expression, detected in breast, endometrium, colon and biliary tract. Detected in polarized epithelial structures characterized by cell-cell adhesion (at protein level).

Its subcellular location is the cell membrane. The protein localises to the cytoplasmic vesicle membrane. May play a role in epithelial cell-cell contacts. May play a role in tumor invasiveness and metastasis formation. This chain is Small cell adhesion glycoprotein (SMAGP), found in Homo sapiens (Human).